A 91-amino-acid chain; its full sequence is Putative membrane protein insertion efficiency factor (91 aa).

The segment at 72–91 (SGGNDPVPEKLTHINHQHEK) is disordered. Residues 78-91 (VPEKLTHINHQHEK) show a composition bias toward basic and acidic residues.

It belongs to the UPF0161 family.

Its subcellular location is the cell inner membrane. In terms of biological role, could be involved in insertion of integral membrane proteins into the membrane. This chain is Putative membrane protein insertion efficiency factor, found in Pseudoalteromonas translucida (strain TAC 125).